We begin with the raw amino-acid sequence, 362 residues long: Peptide chain release factor 1 (362 aa).

Gln237 carries the N5-methylglutamine modification.

It belongs to the prokaryotic/mitochondrial release factor family. Post-translationally, methylated by PrmC. Methylation increases the termination efficiency of RF1.

It is found in the cytoplasm. Its function is as follows. Peptide chain release factor 1 directs the termination of translation in response to the peptide chain termination codons UAG and UAA. This is Peptide chain release factor 1 from Legionella pneumophila (strain Paris).